Consider the following 80-residue polypeptide: MSTVVVDAVEHVVRGIVDNPDDVRVDLVISRRGRTVEVHVHPDDLGKVIGRGGRTATALRKLVAGIGGRGIRVDVVDTDQ.

The 48-residue stretch at 33-80 (GRTVEVHVHPDDLGKVIGRGGRTATALRKLVAGIGGRGIRVDVVDTDQ) folds into the KH domain.

Belongs to the KhpA RNA-binding protein family.

Its subcellular location is the cytoplasm. Functionally, a probable RNA-binding protein. The protein is RNA-binding protein KhpA of Mycobacterium leprae (strain TN).